Reading from the N-terminus, the 401-residue chain is tRNA pseudouridine synthase Pus10 (401 aa).

One can recognise a THUMP domain in the interval 64-195; the sequence is ALAKSGHRES…DGSVSVEVMP (132 aa).

Belongs to the pseudouridine synthase Pus10 family.

It carries out the reaction uridine(54) in tRNA = pseudouridine(54) in tRNA. It catalyses the reaction uridine(55) in tRNA = pseudouridine(55) in tRNA. In terms of biological role, responsible for synthesis of pseudouridine from uracil-54 and uracil-55 in the psi GC loop of transfer RNAs. This is tRNA pseudouridine synthase Pus10 from Caldivirga maquilingensis (strain ATCC 700844 / DSM 13496 / JCM 10307 / IC-167).